The following is a 381-amino-acid chain: 1-deoxy-D-xylulose 5-phosphate reductoisomerase (381 aa).

NADPH contacts are provided by threonine 11, glycine 12, serine 13, isoleucine 14, lysine 36, asparagine 37, and asparagine 121. Residue lysine 122 coordinates 1-deoxy-D-xylulose 5-phosphate. Position 123 (glutamate 123) interacts with NADPH. Aspartate 147 is a binding site for Mn(2+). Residues serine 148, glutamate 149, serine 173, and histidine 196 each contribute to the 1-deoxy-D-xylulose 5-phosphate site. Glutamate 149 is a binding site for Mn(2+). An NADPH-binding site is contributed by glycine 202. The 1-deoxy-D-xylulose 5-phosphate site is built by serine 209, asparagine 214, lysine 215, and glutamate 218. Glutamate 218 is a binding site for Mn(2+).

The protein belongs to the DXR family. Mg(2+) is required as a cofactor. Requires Mn(2+) as cofactor.

It carries out the reaction 2-C-methyl-D-erythritol 4-phosphate + NADP(+) = 1-deoxy-D-xylulose 5-phosphate + NADPH + H(+). The protein operates within isoprenoid biosynthesis; isopentenyl diphosphate biosynthesis via DXP pathway; isopentenyl diphosphate from 1-deoxy-D-xylulose 5-phosphate: step 1/6. Catalyzes the NADPH-dependent rearrangement and reduction of 1-deoxy-D-xylulose-5-phosphate (DXP) to 2-C-methyl-D-erythritol 4-phosphate (MEP). In Acetivibrio thermocellus (strain ATCC 27405 / DSM 1237 / JCM 9322 / NBRC 103400 / NCIMB 10682 / NRRL B-4536 / VPI 7372) (Clostridium thermocellum), this protein is 1-deoxy-D-xylulose 5-phosphate reductoisomerase.